Here is a 509-residue protein sequence, read N- to C-terminus: Ankyrin repeat domain-containing protein 13C (509 aa).

Residues 1–19 (MTGEKIRSLHRDQKPSKDE) are compositionally biased toward basic and acidic residues. The segment at 1–42 (MTGEKIRSLHRDQKPSKDEDLLEPDEEATAGGTFTRTGKLKN) is disordered. ANK repeat units follow at residues 79–110 (DAYF…QKDN), 111–140 (HGNT…PVKV), and 144–173 (QGWS…QQSR).

Its subcellular location is the endoplasmic reticulum membrane. Functionally, acts as a molecular chaperone for G protein-coupled receptors, regulating their biogenesis and exit from the ER. In Xenopus tropicalis (Western clawed frog), this protein is Ankyrin repeat domain-containing protein 13C (ankrd13c).